Here is a 162-residue protein sequence, read N- to C-terminus: Chemoreceptor glutamine deamidase CheD (162 aa).

This sequence belongs to the CheD family. In terms of assembly, forms a complex with CheC.

It carries out the reaction L-glutaminyl-[protein] + H2O = L-glutamyl-[protein] + NH4(+). In terms of biological role, deamidates glutamine residues to glutamate on methyl-accepting chemotaxis receptors (MCPs). CheD-mediated MCP deamidation is required for productive communication of the conformational signals of the chemoreceptors to the CheA kinase. In Halalkalibacterium halodurans (strain ATCC BAA-125 / DSM 18197 / FERM 7344 / JCM 9153 / C-125) (Bacillus halodurans), this protein is Chemoreceptor glutamine deamidase CheD.